Here is a 1483-residue protein sequence, read N- to C-terminus: Chromosome partition protein MukB (1483 aa).

34 to 41 (GGNGAGKS) serves as a coordination point for ATP. 7 coiled-coil regions span residues 326-418 (LEAD…QYNQ), 444-480 (LETF…QAYQ), 509-601 (RHLA…MQRA), 780-804 (RAAC…FATL), 837-923 (EIRQ…AKLE), 977-1115 (EMLS…TAKA), and 1209-1265 (VEAI…LQNV). The segment at 666–783 (PGGSEDQRLN…EVPLFGRAAC (118 aa)) is flexible hinge.

This sequence belongs to the SMC family. MukB subfamily. In terms of assembly, homodimerization via its hinge domain. Binds to DNA via its C-terminal region. Interacts, and probably forms a ternary complex, with MukE and MukF via its C-terminal region. The complex formation is stimulated by calcium or magnesium. Interacts with tubulin-related protein FtsZ.

The protein resides in the cytoplasm. It is found in the nucleoid. In terms of biological role, plays a central role in chromosome condensation, segregation and cell cycle progression. Functions as a homodimer, which is essential for chromosome partition. Involved in negative DNA supercoiling in vivo, and by this means organize and compact chromosomes. May achieve or facilitate chromosome segregation by condensation DNA from both sides of a centrally located replisome during cell division. The protein is Chromosome partition protein MukB of Shigella dysenteriae serotype 1 (strain Sd197).